A 250-amino-acid polypeptide reads, in one-letter code: Small ribosomal subunit protein uS3 (250 aa).

Residues 39 to 111 (IRTLIKNHYP…KVQINIFEVK (73 aa)) enclose the KH type-2 domain.

Belongs to the universal ribosomal protein uS3 family. In terms of assembly, part of the 30S ribosomal subunit. Forms a tight complex with proteins S10 and S14.

Binds the lower part of the 30S subunit head. Binds mRNA in the 70S ribosome, positioning it for translation. The sequence is that of Small ribosomal subunit protein uS3 from Phytoplasma vitis (Flavescence doree phytoplasma).